Consider the following 352-residue polypeptide: Putative [LysW]-L-2-aminoadipate 6-phosphate reductase (352 aa).

NADP(+) is bound at residue Ser11–Thr14. Residue Cys148 is part of the active site. Asn319 contacts NADP(+).

Belongs to the NAGSA dehydrogenase family. Type 1 subfamily. LysY sub-subfamily.

It is found in the cytoplasm. It carries out the reaction [amino-group carrier protein]-C-terminal-N-(1-carboxy-5-oxopentan-1-yl)-L-glutamine + phosphate + NADP(+) = [amino-group carrier protein]-C-terminal-N-(1-carboxy-5-phosphooxy-5-oxopentan-1-yl)-L-glutamine + NADPH + H(+). Its pathway is amino-acid biosynthesis; L-lysine biosynthesis via AAA pathway; L-lysine from L-alpha-aminoadipate (Thermus route): step 3/5. Catalyzes the NADPH-dependent reduction of [LysW]-aminoadipate 6-phosphate to yield [LysW]-aminoadipate 6-semialdehyde. This Thermomicrobium roseum (strain ATCC 27502 / DSM 5159 / P-2) protein is Putative [LysW]-L-2-aminoadipate 6-phosphate reductase.